Here is a 318-residue protein sequence, read N- to C-terminus: Actin-related protein 2/3 complex subunit 2A (318 aa).

The disordered stretch occupies residues 297–318 (RSMNNKSFKRLGLNEVNHTNSK).

Belongs to the ARPC2 family. Component of the Arp2/3 complex composed of ARP2, ARP3, ARPC1/p41-ARC, ARPC2/p34-ARC, ARPC3/p21-ARC, ARPC4/p20-ARC and ARPC5/p16-ARC. Interacts with ARPC4. Expressed at low levels in all tissues with a relatively highest expression in inflorescences.

The protein resides in the cytoplasm. Its subcellular location is the cytoskeleton. The protein localises to the cell projection. Functions as actin-binding component of the Arp2/3 complex which is involved in regulation of actin polymerization and together with an activating nucleation-promoting factor (NPF) mediates the formation of branched actin networks. Seems to contact the mother actin filament. Arp2/3 complex plays a critical role in the control of cell morphogenesis via the modulation of cell polarity development. The polypeptide is Actin-related protein 2/3 complex subunit 2A (ARPC2A) (Arabidopsis thaliana (Mouse-ear cress)).